The chain runs to 207 residues: LexA repressor (207 aa).

Residues V28–A48 constitute a DNA-binding region (H-T-H motif). Catalysis depends on for autocatalytic cleavage activity residues S129 and K167.

This sequence belongs to the peptidase S24 family. Homodimer.

The catalysed reaction is Hydrolysis of Ala-|-Gly bond in repressor LexA.. Functionally, represses a number of genes involved in the response to DNA damage (SOS response), including recA and lexA. In the presence of single-stranded DNA, RecA interacts with LexA causing an autocatalytic cleavage which disrupts the DNA-binding part of LexA, leading to derepression of the SOS regulon and eventually DNA repair. In Brevibacillus brevis (strain 47 / JCM 6285 / NBRC 100599), this protein is LexA repressor.